A 37-amino-acid chain; its full sequence is Mu-agatoxin-Aa1f (37 aa).

Disulfide bonds link cysteine 2–cysteine 18, cysteine 9–cysteine 23, cysteine 17–cysteine 33, and cysteine 25–cysteine 31. An Asparagine amide modification is found at asparagine 37.

The protein belongs to the neurotoxin 07 (Beta/delta-agtx) family. 03 (aga-4) subfamily. Aga sub-subfamily. As to expression, expressed by the venom gland.

The protein resides in the secreted. Insecticidal neurotoxin that induces an irreversible spastic paralysis when injected into insects. Modifies presynaptic voltage-gated sodium channels (Nav), causing them to open at the normal resting potential of the nerve. This leads to spontaneous release of neurotransmitter and repetitive action potentials in motor neurons. The sequence is that of Mu-agatoxin-Aa1f from Agelenopsis aperta (North American funnel-web spider).